A 272-amino-acid chain; its full sequence is D-aminoacyl-tRNA deacylase (272 aa).

It belongs to the DtdA deacylase family. Monomer. It depends on Zn(2+) as a cofactor.

The catalysed reaction is a D-aminoacyl-tRNA + H2O = a tRNA + a D-alpha-amino acid + H(+). It carries out the reaction glycyl-tRNA(Ala) + H2O = tRNA(Ala) + glycine + H(+). Functionally, D-aminoacyl-tRNA deacylase with broad substrate specificity. By recycling D-aminoacyl-tRNA to D-amino acids and free tRNA molecules, this enzyme counteracts the toxicity associated with the formation of D-aminoacyl-tRNA entities in vivo. This Thermococcus kodakarensis (strain ATCC BAA-918 / JCM 12380 / KOD1) (Pyrococcus kodakaraensis (strain KOD1)) protein is D-aminoacyl-tRNA deacylase.